A 162-amino-acid chain; its full sequence is Lipoprotein signal peptidase (162 aa).

The next 4 helical transmembrane spans lie at 9-29, 39-59, 66-86, and 95-115; these read LCLV…LVAT, VIHG…FGLF, VRKF…LWLY, and VLSF…IDRF. Catalysis depends on residues Asp-122 and Asp-140. The helical transmembrane segment at 136-156 threads the bilayer; that stretch reads FNVADSAITIGMVVFVYHVIF.

This sequence belongs to the peptidase A8 family.

The protein resides in the cell inner membrane. The enzyme catalyses Release of signal peptides from bacterial membrane prolipoproteins. Hydrolyzes -Xaa-Yaa-Zaa-|-(S,diacylglyceryl)Cys-, in which Xaa is hydrophobic (preferably Leu), and Yaa (Ala or Ser) and Zaa (Gly or Ala) have small, neutral side chains.. Its pathway is protein modification; lipoprotein biosynthesis (signal peptide cleavage). This protein specifically catalyzes the removal of signal peptides from prolipoproteins. This Desulforapulum autotrophicum (strain ATCC 43914 / DSM 3382 / VKM B-1955 / HRM2) (Desulfobacterium autotrophicum) protein is Lipoprotein signal peptidase.